The sequence spans 257 residues: Hydroxyacylglutathione hydrolase (257 aa).

Zn(2+) contacts are provided by His54, His56, Asp58, His59, His113, Asp137, and His175.

The protein belongs to the metallo-beta-lactamase superfamily. Glyoxalase II family. Monomer. Zn(2+) is required as a cofactor.

The catalysed reaction is an S-(2-hydroxyacyl)glutathione + H2O = a 2-hydroxy carboxylate + glutathione + H(+). The protein operates within secondary metabolite metabolism; methylglyoxal degradation; (R)-lactate from methylglyoxal: step 2/2. Thiolesterase that catalyzes the hydrolysis of S-D-lactoyl-glutathione to form glutathione and D-lactic acid. This is Hydroxyacylglutathione hydrolase from Rippkaea orientalis (strain PCC 8801 / RF-1) (Cyanothece sp. (strain PCC 8801)).